We begin with the raw amino-acid sequence, 360 residues long: DNA integrity scanning protein DisA (360 aa).

The 139-residue stretch at 9–147 (DDEIIEVLRM…GSRKYILRET (139 aa)) folds into the DAC domain. ATP contacts are provided by residues glycine 76, leucine 94, and 107–111 (TRHKT).

The protein belongs to the DisA family. In terms of assembly, homooctamer. It depends on Mg(2+) as a cofactor.

The catalysed reaction is 2 ATP = 3',3'-c-di-AMP + 2 diphosphate. In terms of biological role, participates in a DNA-damage check-point that is active prior to asymmetric division when DNA is damaged. DisA forms globular foci that rapidly scan along the chromosomes during sporulation, searching for lesions. When a lesion is present, DisA pauses at the lesion site. This triggers a cellular response that culminates in a temporary block in sporulation initiation. Also has diadenylate cyclase activity, catalyzing the condensation of 2 ATP molecules into cyclic di-AMP (c-di-AMP). c-di-AMP acts as a signaling molecule that couples DNA integrity with progression of sporulation. The rise in c-di-AMP level generated by DisA while scanning the chromosome, operates as a positive signal that advances sporulation; upon encountering a lesion, the DisA focus arrests at the damaged site and halts c-di-AMP synthesis. This Acetivibrio thermocellus (strain ATCC 27405 / DSM 1237 / JCM 9322 / NBRC 103400 / NCIMB 10682 / NRRL B-4536 / VPI 7372) (Clostridium thermocellum) protein is DNA integrity scanning protein DisA.